Reading from the N-terminus, the 72-residue chain is Small ribosomal subunit protein bS18 (72 aa).

It belongs to the bacterial ribosomal protein bS18 family. Part of the 30S ribosomal subunit. Forms a tight heterodimer with protein bS6.

In terms of biological role, binds as a heterodimer with protein bS6 to the central domain of the 16S rRNA, where it helps stabilize the platform of the 30S subunit. In Trichodesmium erythraeum (strain IMS101), this protein is Small ribosomal subunit protein bS18.